The chain runs to 468 residues: Two-component response regulator-like APRR9 (468 aa).

The region spanning 38 to 156 (RVLLVESDYS…ELKNLWQHVW (119 aa)) is the Response regulatory domain. Polar residues-rich tracts occupy residues 168–177 (HAQSLPASQH) and 194–203 (DQGSGAQAIN). 3 disordered regions span residues 168–203 (HAQS…QAIN), 302–416 (VVAL…SRSQ), and 442–468 (RKKL…STKS). Positions 315-327 (TPTESHEKLRKVT) are enriched in basic and acidic residues. Positions 328-364 (SDQGSATTSSNQENIGSSSVSFRNQVLQSTVTNQKQD) are enriched in polar residues. 2 stretches are compositionally biased toward basic and acidic residues: residues 371–382 (SNREKAASKEVE) and 400–409 (EKPKEEESAK). The 43-residue stretch at 417-459 (REAALMKFRLKRKDRCFDKKVRYQSRKKLAEQRPRVKGQFVRT) folds into the CCT domain. The span at 458–468 (RTVNSDASTKS) shows a compositional bias: polar residues.

Belongs to the ARR-like family. Post-translationally, phosphorylated. Phosphorylation varies throughout the diurnal cycle.

The protein localises to the nucleus. Functionally, transcriptional repressor of CCA1 and LHY, and positive regulator of LWD1 and LWD2 expression. Controls photoperiodic flowering response and temperature compensation. Involved in the positive and negative feedback loops of the circadian clock. Expression of several members of the ARR-like family is controlled by circadian rhythm. Regulated at the transcriptional level by a corepressor complex consisting of ELF4, ELF3, and LUX. APRR9, APRR7, and APRR5 coordinately act on the upstream region of the target genes to repress their expression from noon until midnight. The particular coordinated sequential expression of APRR9, APRR7, APRR5, APRR3 and APPR1 result to circadian waves that may be at the basis of the endogenous circadian clock. This is Two-component response regulator-like APRR9 (APRR9) from Arabidopsis thaliana (Mouse-ear cress).